A 951-amino-acid chain; its full sequence is Spliceosome associated factor 3, U4/U6 recycling protein (951 aa).

The segment at 1 to 58 (MAATGNEEQTLLPDIEEEAEGMEREMESEDDEEEGMGVEHSEEEDEEDTSEDERENEA) is disordered. Residues 14–56 (DIEEEAEGMEREMESEDDEEEGMGVEHSEEEDEEDTSEDEREN) show a composition bias toward acidic residues. HAT repeat units lie at residues 88–120 (GKLHRLRKARQKMSELFPLTEEIWLDWLKDEIR), 126–157 (SDREKVYELFERAIKDYVCPEIWLEYVQYSIG), 163–199 (GGIERVRSIFERALTAVGLHMTKGASIWEAYREFEIV), 222–255 (AQLERIHTLFRRQLAVPLMDMEGTYAEYSDWADD), 304–336 (GDPARVQIIFERALAENCLVPDLWIKYTTYLDR), 339–371 (KIKDLVLSAHERAVRNCPWTMGLWKSYLLALER), 374–410 (ADHQTVKDVFEKALNAGFIQATDYVEIWQSYLDYLRR), and 467–500 (KNMQKARELWDSIMTKGNAKYANMWLEYYNLERS). Positions 517–941 (CTSDYPEHVC…LDTQTKSLSN (425 aa)) are necessary and sufficient for U6 snRNA binding. Residues 533-593 (ERVEGSLEDW…VKADKKAQKK (61 aa)) are a coiled coil. Positions 567–581 (EALHARQEEEKAEQR) are enriched in basic and acidic residues. The disordered stretch occupies residues 567–686 (EALHARQEEE…HDMPKEQRKD (120 aa)). Basic residues predominate over residues 582-596 (RKVKADKKAQKKGQK). The span at 608-619 (DDDEEEWGEEAE) shows a compositional bias: acidic residues. Basic and acidic residues predominate over residues 674–686 (RQPHDMPKEQRKD). 2 RRM domains span residues 688–766 (NCVF…PCVD) and 785–862 (HKIF…ISNP). Positions 905–938 (RQSTPDAKAENGTISAPHATVTDGETSLDTQTKS) are disordered. A compositionally biased stretch (polar residues) spans 927–938 (DGETSLDTQTKS).

It is found in the nucleus. The protein resides in the nucleoplasm. Its subcellular location is the cajal body. It localises to the nucleus speckle. The protein localises to the cytoplasm. U6 snRNP-binding protein that functions as a recycling factor of the splicing machinery. Promotes the initial reassembly of U4 and U6 snRNPs following their ejection from the spliceosome during its maturation. May also function as a substrate targeting factor for deubiquitinases and mediate the deubiquitination of components of the spliceosome and histones. The polypeptide is Spliceosome associated factor 3, U4/U6 recycling protein (Danio rerio (Zebrafish)).